A 485-amino-acid polypeptide reads, in one-letter code: Bifunctional protein HldE (485 aa).

Residues 1–326 are ribokinase; it reads MDFSSTRVLC…AELDESAISN (326 aa). Position 195–198 (195–198) interacts with ATP; the sequence is NVKE. The active site involves aspartate 271. The tract at residues 354–485 is cytidylyltransferase; it reads FTNGCFDILH…GIVKKISTLT (132 aa).

The protein in the N-terminal section; belongs to the carbohydrate kinase PfkB family. It in the C-terminal section; belongs to the cytidylyltransferase family. Homodimer.

The enzyme catalyses D-glycero-beta-D-manno-heptose 7-phosphate + ATP = D-glycero-beta-D-manno-heptose 1,7-bisphosphate + ADP + H(+). It catalyses the reaction D-glycero-beta-D-manno-heptose 1-phosphate + ATP + H(+) = ADP-D-glycero-beta-D-manno-heptose + diphosphate. It participates in nucleotide-sugar biosynthesis; ADP-L-glycero-beta-D-manno-heptose biosynthesis; ADP-L-glycero-beta-D-manno-heptose from D-glycero-beta-D-manno-heptose 7-phosphate: step 1/4. The protein operates within nucleotide-sugar biosynthesis; ADP-L-glycero-beta-D-manno-heptose biosynthesis; ADP-L-glycero-beta-D-manno-heptose from D-glycero-beta-D-manno-heptose 7-phosphate: step 3/4. Catalyzes the phosphorylation of D-glycero-D-manno-heptose 7-phosphate at the C-1 position to selectively form D-glycero-beta-D-manno-heptose-1,7-bisphosphate. Its function is as follows. Catalyzes the ADP transfer from ATP to D-glycero-beta-D-manno-heptose 1-phosphate, yielding ADP-D-glycero-beta-D-manno-heptose. This chain is Bifunctional protein HldE, found in Granulibacter bethesdensis (strain ATCC BAA-1260 / CGDNIH1).